Here is a 355-residue protein sequence, read N- to C-terminus: Phosphate acyltransferase (355 aa).

It belongs to the PlsX family. In terms of assembly, homodimer. Probably interacts with PlsY.

Its subcellular location is the cytoplasm. It carries out the reaction a fatty acyl-[ACP] + phosphate = an acyl phosphate + holo-[ACP]. Its pathway is lipid metabolism; phospholipid metabolism. Catalyzes the reversible formation of acyl-phosphate (acyl-PO(4)) from acyl-[acyl-carrier-protein] (acyl-ACP). This enzyme utilizes acyl-ACP as fatty acyl donor, but not acyl-CoA. This is Phosphate acyltransferase from Erythrobacter litoralis (strain HTCC2594).